We begin with the raw amino-acid sequence, 519 residues long: Golgi-associated kinase 1B (519 aa).

The Cytoplasmic portion of the chain corresponds to 1–37 (MTCPDKPGQLINWFICSLCVPRVRKLWSSRRPRTRRN). A helical; Signal-anchor for type II membrane protein membrane pass occupies residues 38 to 55 (LLLGTACAIYLGFLVSQV). The Extracellular segment spans residues 56 to 519 (GRASLQHGQA…HGVKVLPMNE (464 aa)). The interval 62–103 (HGQAAEKGPHRSRDTAEPSFPEIPLDGTLAPPESQGNGSTLQ) is disordered. Residues 68–77 (KGPHRSRDTA) show a composition bias toward basic and acidic residues. Asn289 is a glycosylation site (N-linked (GlcNAc...) asparagine).

This sequence belongs to the GASK family.

The protein localises to the golgi apparatus membrane. The chain is Golgi-associated kinase 1B from Homo sapiens (Human).